The chain runs to 122 residues: Large ribosomal subunit protein uL14 (122 aa).

Belongs to the universal ribosomal protein uL14 family. As to quaternary structure, part of the 50S ribosomal subunit. Forms a cluster with proteins L3 and L19. In the 70S ribosome, L14 and L19 interact and together make contacts with the 16S rRNA in bridges B5 and B8.

Binds to 23S rRNA. Forms part of two intersubunit bridges in the 70S ribosome. The protein is Large ribosomal subunit protein uL14 of Burkholderia multivorans (strain ATCC 17616 / 249).